Here is a 317-residue protein sequence, read N- to C-terminus: UV DNA damage endonuclease (317 aa).

This sequence belongs to the uve1/UvsE family.

Functionally, component in a DNA repair pathway. Removal of UV LIGHT damaged nucleotides. Recognizes pyrimidine dimers and cleave a phosphodiester bond immediately 5' to the lesion. The sequence is that of UV DNA damage endonuclease from Bacillus cereus (strain 03BB102).